We begin with the raw amino-acid sequence, 574 residues long: K(+)/H(+) antiporter NhaP2 (574 aa).

13 helical membrane passes run 6 to 26 (INSFFLIGALLAAVSVLLSPV), 34 to 54 (ILLIFLAVGILAGEDGPGGIL), 58 to 78 (YSTAYLVSNLALAIILLDGGM), 87 to 107 (VALWPALSLATFGVAITTSIT), 109 to 129 (VMAAWLFDLHWLQGLLVGAIV), 173 to 193 (IAILANVDAELSVSFMLISFI), 196 to 216 (FGLGIFLGLGGGWLLWKLVNL), 219 to 239 (LAEGLYSILVLSGGLMIYAAS), 242 to 262 (LGGSGILSIYLVGLFLGNKPT), 271 to 291 (VLDGMTWVSQIGMFLVLGLLL), 299 to 319 (IWLPGLALAFGMILFARPLAV), 335 to 355 (WFISWVGLRGAVPIILAVFPM), and 359 to 379 (LPGAQLYFNLAFFVVLVSLLV). One can recognise an RCK C-terminal domain in the interval 405 to 486 (SGVEIYPSSE…LEALSNLFSQ (82 aa)).

Belongs to the monovalent cation:proton antiporter 1 (CPA1) transporter (TC 2.A.36) family. NhaP2 subfamily.

It is found in the cell inner membrane. It catalyses the reaction K(+)(in) + H(+)(out) = K(+)(out) + H(+)(in). K(+)/H(+) antiporter that extrudes potassium in exchange for external protons and maintains the internal concentration of potassium under toxic levels. The protein is K(+)/H(+) antiporter NhaP2 of Shewanella sp. (strain ANA-3).